We begin with the raw amino-acid sequence, 766 residues long: Serine/threonine-protein kinase tousled-like 1 (766 aa).

The disordered stretch occupies residues 1-198 (MSVQSSSGSL…PSPTALAFGD (198 aa)). A compositionally biased stretch (low complexity) spans 20–33 (STSPTPGSAAAARS). Position 38 is a phosphothreonine (Thr38). Residues 43–64 (RPREGAMDELHSLDPRRQELLE) are compositionally biased toward basic and acidic residues. A phosphoserine mark is found at Ser54, Ser77, and Ser80. Low complexity predominate over residues 68-85 (TGVATGSTGSTGSCSVGA). Positions 87-103 (ASTNNESSNHSFGSLGS) are enriched in polar residues. Over residues 105-121 (SDKESETPEKKQSESSR) the composition is skewed to basic and acidic residues. Phosphoserine occurs at positions 134, 159, 174, and 176. Residues 170 to 192 (SPQNSHSHSTPSSSVRPNSPSPT) show a composition bias toward low complexity. Residues 229 to 280 (NQDLEKKEGRIDDLLRANCDLRRQIDDQQKLLEKYKERLNKCISMSKKLLIE) adopt a coiled-coil conformation. The tract at residues 344 to 381 (KLLGKRKPPTANNSQAPATNSEAKQRKTKAVNGAENDP) is disordered. Over residues 353 to 365 (TANNSQAPATNSE) the composition is skewed to polar residues. The stretch at 397–445 (HEQEEIFKLRLGHLKKEEAEIQAELERLERVRNLHIRELKRINNEDNSQ) forms a coiled coil. Residues 456-734 (YLLLHLLGRG…VHQLANDPYL (279 aa)) form the Protein kinase domain. ATP is bound by residues 462–470 (LGRGGFSEV) and Lys485. Asp586 acts as the Proton acceptor in catalysis. Ser743 carries the post-translational modification Phosphoserine. The tract at residues 745 to 766 (GNLHMSGLTATPTPPSSSIITY) is disordered.

The protein belongs to the protein kinase superfamily. Ser/Thr protein kinase family. Heterodimer with TLK2. The cofactor is Mg(2+). In terms of tissue distribution, ubiquitously expressed in all tissues examined.

It localises to the nucleus. The enzyme catalyses L-seryl-[protein] + ATP = O-phospho-L-seryl-[protein] + ADP + H(+). The catalysed reaction is L-threonyl-[protein] + ATP = O-phospho-L-threonyl-[protein] + ADP + H(+). Cell-cycle regulated, maximal activity in S-phase. Inactivated by phosphorylation at Ser-743, potentially by CHEK1. Functionally, rapidly and transiently inhibited by phosphorylation following the generation of DNA double-stranded breaks during S-phase. This is cell cycle checkpoint and ATM-pathway dependent and appears to regulate processes involved in chromatin assembly. Isoform 3 protects the cells from the ionizing radiation by facilitating the repair of DSBs. In vitro, phosphorylates histone H3 at 'Ser-10'. This is Serine/threonine-protein kinase tousled-like 1 (Tlk1) from Mus musculus (Mouse).